We begin with the raw amino-acid sequence, 416 residues long: Serine hydroxymethyltransferase (416 aa).

(6S)-5,6,7,8-tetrahydrofolate contacts are provided by residues L121 and 125–127 (GHL). K229 bears the N6-(pyridoxal phosphate)lysine mark.

It belongs to the SHMT family. As to quaternary structure, homodimer. It depends on pyridoxal 5'-phosphate as a cofactor.

It is found in the cytoplasm. It carries out the reaction (6R)-5,10-methylene-5,6,7,8-tetrahydrofolate + glycine + H2O = (6S)-5,6,7,8-tetrahydrofolate + L-serine. The protein operates within one-carbon metabolism; tetrahydrofolate interconversion. It functions in the pathway amino-acid biosynthesis; glycine biosynthesis; glycine from L-serine: step 1/1. In terms of biological role, catalyzes the reversible interconversion of serine and glycine with tetrahydrofolate (THF) serving as the one-carbon carrier. This reaction serves as the major source of one-carbon groups required for the biosynthesis of purines, thymidylate, methionine, and other important biomolecules. Also exhibits THF-independent aldolase activity toward beta-hydroxyamino acids, producing glycine and aldehydes, via a retro-aldol mechanism. In Bordetella avium (strain 197N), this protein is Serine hydroxymethyltransferase.